A 239-amino-acid polypeptide reads, in one-letter code: MAEPVATPTVELSGVRKDYVAGPVVTPVLHGVDLTVGAGEFTALMGPSGSGKSTLLNLIGLLDRPTGGRVRVAGLDTAALDDDAMARTRGRTIGFVFQFHHLLPAFTALENVMIPMMAARGRAAPDMAECGEHLLRQVGLGAVLHRRATQLSGGQQQRVAIARALAMAPRLVLADEPTGNLDTHAADEVFALLREFNRRAGITFLIVTHDPRLADRCDRIVELVDGRIVADGPHRRSGA.

Residues 10–239 (VELSGVRKDY…ADGPHRRSGA (230 aa)) enclose the ABC transporter domain. Residue 46 to 53 (GPSGSGKS) participates in ATP binding.

The protein belongs to the ABC transporter superfamily. Lipoprotein translocase (TC 3.A.1.125) family. As to quaternary structure, the complex is composed of two ATP-binding proteins (LolD) and two transmembrane proteins (LolC and LolE).

Its subcellular location is the cell inner membrane. Its function is as follows. Part of the ABC transporter complex LolCDE involved in the translocation of mature outer membrane-directed lipoproteins, from the inner membrane to the periplasmic chaperone, LolA. Responsible for the formation of the LolA-lipoprotein complex in an ATP-dependent manner. This Anaeromyxobacter dehalogenans (strain 2CP-C) protein is Lipoprotein-releasing system ATP-binding protein LolD.